The primary structure comprises 466 residues: Ribulose bisphosphate carboxylase large chain (466 aa).

Lysine 5 carries the post-translational modification N6,N6,N6-trimethyllysine. Positions 114 and 164 each coordinate substrate. Lysine 166 (proton acceptor) is an active-site residue. Lysine 168 contributes to the substrate binding site. The Mg(2+) site is built by lysine 192, aspartate 194, and glutamate 195. Lysine 192 is subject to N6-carboxylysine. The active-site Proton acceptor is the histidine 285. Substrate is bound by residues arginine 286, histidine 318, and serine 370.

The protein belongs to the RuBisCO large chain family. Type I subfamily. As to quaternary structure, heterohexadecamer of 8 large chains and 8 small chains; disulfide-linked. The disulfide link is formed within the large subunit homodimers. Mg(2+) is required as a cofactor. The disulfide bond which can form in the large chain dimeric partners within the hexadecamer appears to be associated with oxidative stress and protein turnover.

The protein localises to the plastid. Its subcellular location is the chloroplast. The enzyme catalyses 2 (2R)-3-phosphoglycerate + 2 H(+) = D-ribulose 1,5-bisphosphate + CO2 + H2O. It carries out the reaction D-ribulose 1,5-bisphosphate + O2 = 2-phosphoglycolate + (2R)-3-phosphoglycerate + 2 H(+). Its function is as follows. RuBisCO catalyzes two reactions: the carboxylation of D-ribulose 1,5-bisphosphate, the primary event in carbon dioxide fixation, as well as the oxidative fragmentation of the pentose substrate in the photorespiration process. Both reactions occur simultaneously and in competition at the same active site. This Vitis aestivalis (Grape) protein is Ribulose bisphosphate carboxylase large chain.